The following is a 487-amino-acid chain: L-carnitine dehydrogenase/betainyl-CoA thioesterase (487 aa).

Residues M1–P327 are L-carnitine dehydrogenase. G8 to G13 is a binding site for NAD(+). Residues D328 to A487 form a betainyl-CoA thioesterase region.

It in the N-terminal section; belongs to the 3-hydroxyacyl-CoA dehydrogenase family. L-carnitine dehydrogenase subfamily. The protein in the C-terminal section; belongs to the betainyl-CoA thioesterase family. As to quaternary structure, homodimer.

It localises to the cytoplasm. The catalysed reaction is carnitine + NAD(+) = 3-dehydrocarnitine + NADH + H(+). It catalyses the reaction N,N,N-trimethylglycyl-CoA + H2O = glycine betaine + CoA + H(+). Its pathway is amine and polyamine metabolism; carnitine metabolism. Multifunctional enzyme that catalyzes the NAD(+)-dependent oxidation of L-carnitine to 3-dehydrocarnitine and the cleavage of betainyl-CoA (N,N,N-trimethylglycyl-CoA) into glycine betaine and coenzyme A. The chain is L-carnitine dehydrogenase/betainyl-CoA thioesterase from Ruegeria pomeroyi (strain ATCC 700808 / DSM 15171 / DSS-3) (Silicibacter pomeroyi).